A 300-amino-acid polypeptide reads, in one-letter code: Transcription factor Sox-3 (300 aa).

Residues 1–35 (MYNMMETEIKSPIPQSNTGSVTGGKNNSANDQDRV) are disordered. The span at 13-30 (IPQSNTGSVTGGKNNSAN) shows a compositional bias: polar residues. The segment at residues 35–103 (VKRPMNAFMV…MHMKEHPDYK (69 aa)) is a DNA-binding region (HMG box). A Phosphoserine modification is found at serine 235. The 9aaTAD motif lies at 251–262 (DLRDMISMYLPP).

Its subcellular location is the nucleus. Functionally, transcriptional activator. In Danio rerio (Zebrafish), this protein is Transcription factor Sox-3.